A 432-amino-acid chain; its full sequence is Gamma-glutamyl phosphate reductase (432 aa).

The protein belongs to the gamma-glutamyl phosphate reductase family.

It localises to the cytoplasm. It catalyses the reaction L-glutamate 5-semialdehyde + phosphate + NADP(+) = L-glutamyl 5-phosphate + NADPH + H(+). It functions in the pathway amino-acid biosynthesis; L-proline biosynthesis; L-glutamate 5-semialdehyde from L-glutamate: step 2/2. In terms of biological role, catalyzes the NADPH-dependent reduction of L-glutamate 5-phosphate into L-glutamate 5-semialdehyde and phosphate. The product spontaneously undergoes cyclization to form 1-pyrroline-5-carboxylate. This chain is Gamma-glutamyl phosphate reductase, found in Brachyspira hyodysenteriae (strain ATCC 49526 / WA1).